Here is a 691-residue protein sequence, read N- to C-terminus: DNA topoisomerase 1 (691 aa).

Residues 3-114 (DYLVIVESPA…DCRVVFNEIT (112 aa)) form the Toprim domain. Mg(2+) contacts are provided by E9 and D82. The Topo IA-type catalytic domain maps to 129-558 (NMDLVDAQQA…NFYTDFEKRV (430 aa)). Residues 163 to 168 (SAGRVQ) are interaction with DNA. Y298 acts as the O-(5'-phospho-DNA)-tyrosine intermediate in catalysis. C4-type zinc fingers lie at residues 579–605 (CELC…FPDC), 619–647 (CPSC…YPDC), and 660–683 (CPKC…CVEC).

The protein belongs to the type IA topoisomerase family. As to quaternary structure, monomer. Interacts with the RNA polymerase core. The cofactor is Mg(2+).

The enzyme catalyses ATP-independent breakage of single-stranded DNA, followed by passage and rejoining.. Its function is as follows. Releases the supercoiling and torsional tension of DNA, which is introduced during the DNA replication and transcription, by transiently cleaving and rejoining one strand of the DNA duplex. Introduces a single-strand break via transesterification at a target site in duplex DNA. The scissile phosphodiester is attacked by the catalytic tyrosine of the enzyme, resulting in the formation of a DNA-(5'-phosphotyrosyl)-enzyme intermediate and the expulsion of a 3'-OH DNA strand. The free DNA strand then undergoes passage around the unbroken strand, thus removing DNA supercoils. Finally, in the religation step, the DNA 3'-OH attacks the covalent intermediate to expel the active-site tyrosine and restore the DNA phosphodiester backbone. This is DNA topoisomerase 1 from Bacillus subtilis (strain 168).